A 133-amino-acid polypeptide reads, in one-letter code: Cytochrome c' (133 aa).

Arginine 12, threonine 72, cysteine 122, cysteine 125, and histidine 126 together coordinate heme c.

In terms of processing, binds 1 heme c group covalently per subunit.

Functionally, cytochrome c' is the most widely occurring bacterial c-type cytochrome. Cytochromes c' are high-spin proteins and the heme has no sixth ligand. Their exact function is not known. The protein is Cytochrome c' of Rhodocyclus tenuis (Rhodospirillum tenue).